We begin with the raw amino-acid sequence, 1278 residues long: Cytoplasmic FMR1-interacting protein 2 (1278 aa).

Position 1062 is an N6-acetyllysine (K1062).

The protein belongs to the CYFIP family. Component of the WAVE1 complex composed of ABI2, CYFIP2, BRK1, NCKAP1 and WASF1/WAVE1. Interacts with FMR1, FXR1 and FXR2. Interacts with FMR1 isoform 6; the interaction occurs in a RNA-dependent manner. Interacts with RAC1 (activated form) which causes the complex to dissociate, releasing activated WASF1. The complex can also be activated by NCK1. Interacts with SHANK3; the interaction mediates the association of SHANK3 with the WAVE1 complex. Interacts with TMEM108 (via N-terminus); the interaction associates TMEM108 with the WAVE1 complex. Expressed in T-cells. Increased expression is observed in CD4(+) T-lymphocytes from patients with multiple sclerosis (at protein level).

The protein localises to the cytoplasm. The protein resides in the nucleus. It is found in the perinuclear region. It localises to the synapse. Its subcellular location is the synaptosome. Involved in T-cell adhesion and p53/TP53-dependent induction of apoptosis. Does not bind RNA. As component of the WAVE1 complex, required for BDNF-NTRK2 endocytic trafficking and signaling from early endosomes. In Homo sapiens (Human), this protein is Cytoplasmic FMR1-interacting protein 2.